Here is a 204-residue protein sequence, read N- to C-terminus: Holliday junction branch migration complex subunit RuvA (204 aa).

Residues 1–64 form a domain I region; it reads MIGRLQGILL…EDAHLLFGFA (64 aa). A domain II region spans residues 65 to 143; the sequence is QKTDRTLFRE…GVKQSDFFVE (79 aa). Residues 144–155 are flexible linker; sequence STHIPLSPSIES. The segment at 156–204 is domain III; it reads HSESSSDEAISALIALGYKPVEAEKMVKRVAKPELTSEQVIREALKVAL.

It belongs to the RuvA family. In terms of assembly, homotetramer. Forms an RuvA(8)-RuvB(12)-Holliday junction (HJ) complex. HJ DNA is sandwiched between 2 RuvA tetramers; dsDNA enters through RuvA and exits via RuvB. An RuvB hexamer assembles on each DNA strand where it exits the tetramer. Each RuvB hexamer is contacted by two RuvA subunits (via domain III) on 2 adjacent RuvB subunits; this complex drives branch migration. In the full resolvosome a probable DNA-RuvA(4)-RuvB(12)-RuvC(2) complex forms which resolves the HJ.

It localises to the cytoplasm. Its function is as follows. The RuvA-RuvB-RuvC complex processes Holliday junction (HJ) DNA during genetic recombination and DNA repair, while the RuvA-RuvB complex plays an important role in the rescue of blocked DNA replication forks via replication fork reversal (RFR). RuvA specifically binds to HJ cruciform DNA, conferring on it an open structure. The RuvB hexamer acts as an ATP-dependent pump, pulling dsDNA into and through the RuvAB complex. HJ branch migration allows RuvC to scan DNA until it finds its consensus sequence, where it cleaves and resolves the cruciform DNA. This chain is Holliday junction branch migration complex subunit RuvA, found in Haemophilus influenzae (strain ATCC 51907 / DSM 11121 / KW20 / Rd).